The sequence spans 950 residues: Protein lin-54 homolog (950 aa).

Disordered regions lie at residues 1-63, 366-387, 500-523, 533-552, and 638-702; these read MDTS…DSLN, NASA…TSSG, ASKP…PRKH, KQSA…GPEA, and VENK…LPPG. Positions 10–26 are enriched in acidic residues; the sequence is SLDDTEPLPELSFEDFL. The span at 29–39 shows a compositional bias: basic and acidic residues; it reads TSEKSSQHMEI. Residues 40-55 show a composition bias toward acidic residues; it reads EALDSEEDNIGGEDLA. Composition is skewed to low complexity over residues 366-386, 500-516, 535-548, and 661-682; these read NASA…STSS, ASKP…PSAS, SASV…SSDA, and QQQS…QQQL. The CRC domain occupies 737-849; that stretch reads RRKHCNCSKS…KCVGCRNMED (113 aa).

It belongs to the lin-54 family. In terms of assembly, component of the DREAM complex at least composed of Myb, Caf1-55, mip40, mip120, mip130, E2f2, Dp, Rbf, Rbf2, lin-52, HDAC1/Rpd3 and l(3)mbt.

The protein resides in the nucleus. Functionally, component of the DREAM complex, a multiprotein complex that can both act as a transcription activator or repressor depending on the context. In follicle cells, the complex plays a central role in the site-specific DNA replication at the chorion loci. During development, the complex represses transcription of developmentally controlled E2F target genes. The polypeptide is Protein lin-54 homolog (mip120) (Drosophila melanogaster (Fruit fly)).